Here is a 494-residue protein sequence, read N- to C-terminus: MANYFNTLNLREQLDQLGRCRFMAREEFATEADYLKGKKVVIVGCGAQGLNQGLNMRDSGLDVSYALRQAAIDEQRQSFKNAKNNGFNVGSYEQLIPTADLVINLTPDKQHTSVVNAVMPLMKQGAALGYSHGFNIVEEGMQIRKDITVVMVAPKCPGTEVREEYKRGFGVPTLIAVHPENDPQGEGWEIAKAWAAATGGHRAGCLASSFVAEVKSDLMGEQTILCGMLQAGSIVCYEKMVADGIDPGYAGKLLQFGWETITEALKFGGITHMMDRLSNPAKIKAFELSEELKDLMRPLYNKHMDDIISGHFSSTMMADWANDDKDLFGWRAETAETAFENYPTTDVKIAEQEYFDNGILMIAMVRAGVELAFEAMTASGIIDESAYYESLHELPLIANTVARKRLYEMNVVISDTAEYGNYLFANVAVPLLREKFMPKVGTDVIGKGLGVVSNQVDNATLIEVNSIIRNHPVEYIGEELRGYMKDMKRIAVGD.

Positions 14 to 208 (LDQLGRCRFM…GGHRAGCLAS (195 aa)) constitute a KARI N-terminal Rossmann domain. NADP(+) is bound by residues 45–48 (CGAQ), R68, R76, S78, and 108–110 (DKQ). Residue H132 is part of the active site. G158 is an NADP(+) binding site. 2 KARI C-terminal knotted domains span residues 209–344 (SFVA…NYPT) and 345–487 (TDVK…MKDM). The Mg(2+) site is built by D217, E221, E389, and E393. A substrate-binding site is contributed by S414.

Belongs to the ketol-acid reductoisomerase family. Mg(2+) is required as a cofactor.

It catalyses the reaction (2R)-2,3-dihydroxy-3-methylbutanoate + NADP(+) = (2S)-2-acetolactate + NADPH + H(+). The catalysed reaction is (2R,3R)-2,3-dihydroxy-3-methylpentanoate + NADP(+) = (S)-2-ethyl-2-hydroxy-3-oxobutanoate + NADPH + H(+). Its pathway is amino-acid biosynthesis; L-isoleucine biosynthesis; L-isoleucine from 2-oxobutanoate: step 2/4. The protein operates within amino-acid biosynthesis; L-valine biosynthesis; L-valine from pyruvate: step 2/4. Its function is as follows. Involved in the biosynthesis of branched-chain amino acids (BCAA). Catalyzes an alkyl-migration followed by a ketol-acid reduction of (S)-2-acetolactate (S2AL) to yield (R)-2,3-dihydroxy-isovalerate. In the isomerase reaction, S2AL is rearranged via a Mg-dependent methyl migration to produce 3-hydroxy-3-methyl-2-ketobutyrate (HMKB). In the reductase reaction, this 2-ketoacid undergoes a metal-dependent reduction by NADPH to yield (R)-2,3-dihydroxy-isovalerate. The polypeptide is Ketol-acid reductoisomerase (NADP(+)) (Vibrio cholerae serotype O1 (strain ATCC 39541 / Classical Ogawa 395 / O395)).